A 484-amino-acid polypeptide reads, in one-letter code: Sushi domain-containing protein 4 (484 aa).

Residues 1 to 35 (MFHHADKGGKKSAFGHPVCGQIILSIILLRPPLLV) form the signal peptide. Sushi domains lie at 46–110 (QICK…VCLS), 111–168 (EDCL…QPTC), 169–230 (QGCL…RCLD), and 232–295 (EACS…YCVK). Intrachain disulfides connect Cys48/Cys90, Cys76/Cys108, Cys113/Cys156, Cys138/Cys168, Cys171/Cys215, Cys201/Cys228, Cys234/Cys280, and Cys265/Cys293. N-linked (GlcNAc...) asparagine glycosylation is found at Asn95 and Asn125. Residue Asn183 is glycosylated (N-linked (GlcNAc...) asparagine). The chain crosses the membrane as a helical span at residues 311-331 (WKVVACTATSVLLALLLVITA). The interval 374 to 484 (SGNYCQPPND…PLVEDGEEDC (111 aa)) is disordered. Composition is skewed to polar residues over residues 424–442 (DSLS…SSSH) and 449–467 (SEKT…TSPS). Acidic residues predominate over residues 470-484 (IADEIPLVEDGEEDC).

It is found in the membrane. The protein is Sushi domain-containing protein 4 (susd4) of Danio rerio (Zebrafish).